We begin with the raw amino-acid sequence, 506 residues long: Probable malate:quinone oxidoreductase (506 aa).

Belongs to the MQO family. FAD serves as cofactor.

The catalysed reaction is (S)-malate + a quinone = a quinol + oxaloacetate. The protein operates within carbohydrate metabolism; tricarboxylic acid cycle; oxaloacetate from (S)-malate (quinone route): step 1/1. The protein is Probable malate:quinone oxidoreductase of Rhodococcus jostii (strain RHA1).